Reading from the N-terminus, the 148-residue chain is uncharacterized protein (148 aa).

4 residues coordinate [4Fe-4S] cluster: cysteine 21, cysteine 24, cysteine 88, and cysteine 117.

This sequence belongs to the complex I 20 kDa subunit family. [4Fe-4S] cluster serves as cofactor.

This is an uncharacterized protein from Methanocaldococcus jannaschii (strain ATCC 43067 / DSM 2661 / JAL-1 / JCM 10045 / NBRC 100440) (Methanococcus jannaschii).